Here is a 128-residue protein sequence, read N- to C-terminus: Disintegrin gabonin-1 (128 aa).

A signal peptide spans 1–20; sequence MIQVLLVIICLAVFPYQGSS. The propeptide occupies 21–47; that stretch reads IILESGNVNDYEIVYPKKVTVLPTGAM. The region spanning 47–112 is the Disintegrin domain; the sequence is MNSAHPCCDP…DCPRNPNKGE (66 aa). Cystine bridges form between cysteine 53/cysteine 76, cysteine 67/cysteine 73, cysteine 72/cysteine 97, and cysteine 85/cysteine 104. The Cell attachment site motif lies at 89–91; sequence RGD. The segment at 108–128 is disordered; sequence PNKGESDELEWSAAATGSVLM.

It belongs to the disintegrin family. Dimeric disintegrin subfamily. Heterodimer with bitisgabonin (bitisgabonin-1 is the name of the heterodimer); disulfide-linked. Expressed by the venom gland.

Its subcellular location is the secreted. The heterodimer bitisgabonin-1 is a potent inhibitor of the adhesion of the RGD-dependent integrin alpha-5/beta-1 (ITGA5/ITGB1) to immobilized fibronectin. The protein is Disintegrin gabonin-1 of Bitis gabonica (Gaboon adder).